The chain runs to 244 residues: Uridylate kinase (244 aa).

17–20 (KVSG) contributes to the ATP binding site. Residues 25 to 30 (GEKGFG) form an involved in allosteric activation by GTP region. Gly-59 provides a ligand contact to UMP. ATP contacts are provided by Gly-60 and Arg-64. UMP contacts are provided by residues Asp-80 and 141–148 (VGNPFFTT). Residues Thr-168, Gln-169, Tyr-174, and Asp-177 each contribute to the ATP site.

This sequence belongs to the UMP kinase family. In terms of assembly, homohexamer.

Its subcellular location is the cytoplasm. It carries out the reaction UMP + ATP = UDP + ADP. The protein operates within pyrimidine metabolism; CTP biosynthesis via de novo pathway; UDP from UMP (UMPK route): step 1/1. With respect to regulation, allosterically activated by GTP. Inhibited by UTP. Functionally, catalyzes the reversible phosphorylation of UMP to UDP. The sequence is that of Uridylate kinase from Ehrlichia canis (strain Jake).